A 215-amino-acid chain; its full sequence is Chaperone protein TorD (215 aa).

Belongs to the TorD/DmsD family. TorD subfamily.

It is found in the cytoplasm. Its function is as follows. Involved in the biogenesis of TorA. Acts on TorA before the insertion of the molybdenum cofactor and, as a result, probably favors a conformation of the apoenzyme that is competent for acquiring the cofactor. This chain is Chaperone protein TorD, found in Vibrio parahaemolyticus serotype O3:K6 (strain RIMD 2210633).